The primary structure comprises 140 residues: Holo-[acyl-carrier-protein] synthase (140 aa).

Residues aspartate 8 and glutamate 57 each coordinate Mg(2+).

Belongs to the P-Pant transferase superfamily. AcpS family. It depends on Mg(2+) as a cofactor.

The protein resides in the cytoplasm. The catalysed reaction is apo-[ACP] + CoA = holo-[ACP] + adenosine 3',5'-bisphosphate + H(+). Functionally, transfers the 4'-phosphopantetheine moiety from coenzyme A to a Ser of acyl-carrier-protein. This chain is Holo-[acyl-carrier-protein] synthase, found in Beijerinckia indica subsp. indica (strain ATCC 9039 / DSM 1715 / NCIMB 8712).